A 238-amino-acid chain; its full sequence is Probable transcriptional regulatory protein SAB0618 (238 aa).

Belongs to the TACO1 family. YeeN subfamily.

The protein resides in the cytoplasm. This Staphylococcus aureus (strain bovine RF122 / ET3-1) protein is Probable transcriptional regulatory protein SAB0618.